A 25-amino-acid polypeptide reads, in one-letter code: Caerin-1.9 (25 aa).

Leucine amide is present on Leu-25.

It belongs to the frog skin active peptide (FSAP) family. Caerin subfamily. Expressed by the skin dorsal glands.

It is found in the secreted. Functionally, antimicrobial peptide. Adopts an alpha helical conformation which can disrupt bacterial membranes. Strongly inhibits the formation of NO by neuronal nitric oxide synthase (nNOS) at micromolar concentrations. Acts by a non-competitive mechanism, probably by binding to calcium/calmodulin and as a consequence blocking calmodulin attachment to nNOS. This is Caerin-1.9 from Ranoidea chloris (Red-eyed tree frog).